A 445-amino-acid polypeptide reads, in one-letter code: Probable D-serine dehydratase (445 aa).

N6-(pyridoxal phosphate)lysine is present on Lys119.

This sequence belongs to the serine/threonine dehydratase family. DsdA subfamily. It depends on pyridoxal 5'-phosphate as a cofactor.

The catalysed reaction is D-serine = pyruvate + NH4(+). The protein is Probable D-serine dehydratase of Pseudomonas putida (strain GB-1).